Consider the following 146-residue polypeptide: Cytochrome c-type biogenesis protein CcmE (146 aa).

Residues 1 to 8 are Cytoplasmic-facing; it reads MHPKRKKR. The helical; Signal-anchor for type II membrane protein transmembrane segment at 9–29 threads the bilayer; the sequence is LLIVLAGLAVVAVASGLILNA. Over 30-146 the chain is Periplasmic; that stretch reads FRSNLVFFHT…IQRAGETVVQ (117 aa). Heme-binding residues include His-124 and Tyr-128.

This sequence belongs to the CcmE/CycJ family.

The protein resides in the cell inner membrane. Heme chaperone required for the biogenesis of c-type cytochromes. Transiently binds heme delivered by CcmC and transfers the heme to apo-cytochromes in a process facilitated by CcmF and CcmH. This is Cytochrome c-type biogenesis protein CcmE from Laribacter hongkongensis (strain HLHK9).